Consider the following 84-residue polypeptide: RQC P-site tRNA stabilizing factor (84 aa).

Positions 1–64 (MRIDKFLQSV…IEEYTILQIP (64 aa)) constitute an S4 RNA-binding domain.

The protein belongs to the RqcP family. In terms of assembly, associates with stalled 50S ribosomal subunits. Binds to RqcH, 23S rRNA and the P-site tRNA. Does not require RqcH for association with 50S subunits.

Its function is as follows. Key component of the ribosome quality control system (RQC), a ribosome-associated complex that mediates the extraction of incompletely synthesized nascent chains from stalled ribosomes and their subsequent degradation. RqcH recruits Ala-charged tRNA, and with RqcP directs the elongation of stalled nascent chains on 50S ribosomal subunits, leading to non-templated C-terminal alanine extensions (Ala tail). The Ala tail promotes nascent chain degradation. RqcP is associated with the translocation-like movement of the peptidyl-tRNA from the A-site into the P-site. The polypeptide is RQC P-site tRNA stabilizing factor (Helicobacter pylori (strain J99 / ATCC 700824) (Campylobacter pylori J99)).